Here is a 331-residue protein sequence, read N- to C-terminus: Adenosine deaminase (331 aa).

Zn(2+)-binding residues include histidine 12 and histidine 14. Substrate-binding residues include histidine 14, aspartate 16, and glycine 170. Position 197 (histidine 197) interacts with Zn(2+). The Proton donor role is filled by glutamate 200. Aspartate 278 contacts Zn(2+). A substrate-binding site is contributed by aspartate 279.

Belongs to the metallo-dependent hydrolases superfamily. Adenosine and AMP deaminases family. Adenosine deaminase subfamily. Zn(2+) serves as cofactor.

It catalyses the reaction adenosine + H2O + H(+) = inosine + NH4(+). It carries out the reaction 2'-deoxyadenosine + H2O + H(+) = 2'-deoxyinosine + NH4(+). Functionally, catalyzes the hydrolytic deamination of adenosine and 2-deoxyadenosine. This chain is Adenosine deaminase, found in Shewanella denitrificans (strain OS217 / ATCC BAA-1090 / DSM 15013).